The primary structure comprises 1072 residues: Vacuolar membrane protease (1072 aa).

Residues 1–9 lie on the Cytoplasmic side of the membrane; that stretch reads MINPISFRP. Residues 10–30 traverse the membrane as a helical segment; sequence GPVTFWTTLIYLALLIPIVII. The Vacuolar portion of the chain corresponds to 31–404; it reads NEKTPAAPKT…SFVLFGLRGM (374 aa). Asn48, Asn116, Asn119, and Asn128 each carry an N-linked (GlcNAc...) asparagine glycan. Zn(2+)-binding residues include His185 and Asp197. Residue Glu231 is the Proton acceptor of the active site. Residues Glu232, Glu257, and His330 each coordinate Zn(2+). The helical transmembrane segment at 405–425 threads the bilayer; the sequence is FAWSLTLLIATPLVLVGITWL. The Cytoplasmic segment spans residues 426–457; the sequence is LRNLDKDYFFTSTVKTKEHPEYEAVPIGGWKG. A helical transmembrane segment spans residues 458 to 478; sequence FFRFPFALGVAVFFTISSALL. Residues 479 to 492 lie on the Vacuolar side of the membrane; sequence MNKVNPLIVYSSRY. Residues 493 to 513 traverse the membrane as a helical segment; it reads SVWVMMVSIFYFSFWMIMRGA. Topologically, residues 514 to 523 are cytoplasmic; that stretch reads NFVRPSALHR. A helical membrane pass occupies residues 524–544; the sequence is GYANLWLFVFGWIVLVAVTAL. Topologically, residues 545–554 are vacuolar; the sequence is EDRRRIAAGY. The helical transmembrane segment at 555–575 threads the bilayer; it reads IFVFLESAIFLSCLISFVELL. The Cytoplasmic segment spans residues 576 to 747; that stretch reads AVPRKSSYAL…YDHEQEWSGH (172 aa). A disordered region spans residues 593–713; it reads GQEHDHNGYQ…GTNDRGRTTF (121 aa). Residues 606 to 617 show a composition bias toward basic and acidic residues; sequence DSTDEPSLRARA. A compositionally biased stretch (polar residues) spans 643-661; it reads GTTNGLSTAPSVAAHSSQP. The chain crosses the membrane as a helical span at residues 748–768; the sequence is LPSWAWFFQFLLLGPFMIILA. Residues 769–789 are Vacuolar-facing; the sequence is AQTGLMLTDAVYQTGSDGSKL. Residues 790-810 form a helical membrane-spanning segment; the sequence is ITPYLIIFVFTVLLILPLTPF. At 811-817 the chain is on the cytoplasmic side; that stretch reads IHRVTHH. A helical transmembrane segment spans residues 818 to 838; the sequence is IPVFLLVVFIVTLTYNLIAFP. At 839–1072 the chain is on the vacuolar side; the sequence is FSANNRYKTF…VEGRKAFKIV (234 aa). 2 N-linked (GlcNAc...) asparagine glycosylation sites follow: Asn932 and Asn974.

The protein belongs to the peptidase M28 family. The cofactor is Zn(2+).

The protein localises to the vacuole membrane. May be involved in vacuolar sorting and osmoregulation. In Neurospora crassa (strain ATCC 24698 / 74-OR23-1A / CBS 708.71 / DSM 1257 / FGSC 987), this protein is Vacuolar membrane protease.